Consider the following 456-residue polypeptide: Histidine--tRNA ligase (456 aa).

This sequence belongs to the class-II aminoacyl-tRNA synthetase family. As to quaternary structure, homodimer.

The protein localises to the cytoplasm. The catalysed reaction is tRNA(His) + L-histidine + ATP = L-histidyl-tRNA(His) + AMP + diphosphate + H(+). The protein is Histidine--tRNA ligase of Cupriavidus taiwanensis (strain DSM 17343 / BCRC 17206 / CCUG 44338 / CIP 107171 / LMG 19424 / R1) (Ralstonia taiwanensis (strain LMG 19424)).